Reading from the N-terminus, the 395-residue chain is MNYNFGGNVFDQEVGVGGEGGGGGEGSGCPWARPCDGCRAAPSVVYCRADAAYLCASCDARVHAANRVASRHERVRVCEACERAPAALACRADAAALCVACDVQVHSANPLPAITIPATSVLAEAVVATATVLGDKDEEVDSWLLLSKDSDNNNNNNNNNDNDNNDNNNSNSSNNGMYFGEVDEYFDLVGYNSYYDNRIENNQDRQYGMHEQQEQQQQQQEMQKEFAEKEGSECVVPSQITMLSEQQHSGYGVVGADQAASMTAGVSAYTDSISNSISFSSMEAGIVPDSTVIDMPNSRILTPAGAINLFSGPSLQMSLHFSSMDREARVLRYREKKKARKFEKTIRYETRKAYAEARPRIKGRFAKRSDVQIEVDQMFSTAALSDGSYGTVPWF.

The B box-type 1; atypical zinc finger occupies proline 30 to histidine 72. Zn(2+) is bound by residues cysteine 35, cysteine 38, cysteine 58, histidine 63, cysteine 78, cysteine 81, cysteine 101, and histidine 106. Residues glutamate 73–proline 117 form a B box-type 2; atypical zinc finger. 2 disordered regions span residues serine 147–glycine 176 and glycine 208–glutamate 228. Positions asparagine 152–asparagine 175 are enriched in low complexity. A CCT domain is found at arginine 326 to arginine 368.

This sequence belongs to the CONSTANS family. Interacts with HAL3 in the dark. Phosphorylated by OSK4 in the presence of HDR1.

The protein resides in the nucleus. Its function is as follows. Probable transcription factor involved in the regulation of flower development. Required for the promotion of flowering under short day (SD) conditions and the suppression of flowering under long day (LD) conditions. Positively regulates the floral activator HEADING DATE 3a (HD3A) under SD and negatively under LD conditions. This Oryza sativa subsp. japonica (Rice) protein is Zinc finger protein HD1.